Reading from the N-terminus, the 494-residue chain is MAKTLSAAQANKEHVLAVSRDFISQPRLTYKTVSGVNGPLVILDEVKFPKFSEIVQLKLADGTHRSGQVLEVSGSKAVVQVFEGTSGIDAKNTLCEFTGDILRTPVSEDMLGRVFNGSGKPIDKGPPILAEDFLDIQGQPINPWSRIYPEEMIQTGISAIDVMNSIARGQKIPIFSAAGLPHNEIAAQICRQAGLVKIPGKSVLDDHEDNFAIVFAAMGVNMETARFFKQDFEENGSMENVCLFLNLANDPTIERIITPRLALTAAEFLAYQCEKHVLVILTDMSSYAEALREVSAAREEVPGRRGFPGYMYTDLATIYERAGRVEGRNGSITQIPILTMPNDDITHPIPDLTGYITEGQIYVDRQLHNRQIYPPVNVLPSLSRLMKSAIGEGMTRKDHSDVSNQLYACYAIGKDVQAMKAVVGEEALTPDDLLYLEFLTKFEKNFITQGNYENRTVFESLDIGWQLLRIFPKEMLKRIPASILAEFYPRDSRH.

Arg-384 provides a ligand contact to ATP.

Belongs to the ATPase alpha/beta chains family. As to quaternary structure, V-ATPase is a heteromultimeric enzyme made up of two complexes: the ATP-hydrolytic V1 complex and the proton translocation V0 complex. The V1 complex consists of three catalytic AB heterodimers that form a heterohexamer, three peripheral stalks each consisting of EG heterodimers, one central rotor including subunits D and F, and the regulatory subunits C and H. The proton translocation complex V0 consists of the proton transport subunit a, a ring of proteolipid subunits c9c'', rotary subunit d, subunits e and f, and the accessory subunits VhaAC45 and ATP6AP2.

Non-catalytic subunit of the V1 complex of vacuolar(H+)-ATPase (V-ATPase), a multisubunit enzyme composed of a peripheral complex (V1) that hydrolyzes ATP and a membrane integral complex (V0) that translocates protons. V-ATPase is responsible for acidifying and maintaining the pH of intracellular compartments and in some cell types, is targeted to the plasma membrane, where it is responsible for acidifying the extracellular environment. Essential for the proper assembly and activity of V-ATPase. This is V-type proton ATPase subunit B (VHA55) from Manduca sexta (Tobacco hawkmoth).